The chain runs to 360 residues: MSQGRGKYDFYIGLGLAMSSSIFIGGSFILKKKGLLRLARKGSMRAGQGGHAYLKEWLWWAGLLSMGAGEVANFAAYAFAPATLVTPLGALSVLVSAILSSYFLNERLNLHGKIGCLLSILGSTVMVIHAPKEEEIETLNEMSHKLGDPGFVVFATLVVIVALILIFVVGPRHGQTNILVYITICSVIGAFSVSCVKGLGIAIKELFAGKPVLRHPLAWILLLSLIVCVSTQINYLNRALDIFNTSIVTPIYYVFFTTSVLTCSAILFKEWQDMPVDDVIGTLSGFFTIIVGIFLLHAFKDVSFSLASLPVSFRKDEKAMNGNLSNMYEVLNNNEESLTCGIEQHTGENVSRRNGNLTAF.

Over 1 to 9 (MSQGRGKYD) the chain is Extracellular. Residues 10 to 30 (FYIGLGLAMSSSIFIGGSFIL) traverse the membrane as a helical segment. The Cytoplasmic portion of the chain corresponds to 31-56 (KKKGLLRLARKGSMRAGQGGHAYLKE). The chain crosses the membrane as a helical span at residues 57 to 77 (WLWWAGLLSMGAGEVANFAAY). Ala78 is a topological domain (extracellular). The helical transmembrane segment at 79–99 (FAPATLVTPLGALSVLVSAIL) threads the bilayer. Residues 100 to 107 (SSYFLNER) are Cytoplasmic-facing. A helical transmembrane segment spans residues 108 to 128 (LNLHGKIGCLLSILGSTVMVI). The Extracellular portion of the chain corresponds to 129–149 (HAPKEEEIETLNEMSHKLGDP). A helical transmembrane segment spans residues 150–170 (GFVVFATLVVIVALILIFVVG). Over 171-175 (PRHGQ) the chain is Cytoplasmic. Residues 176–196 (TNILVYITICSVIGAFSVSCV) form a helical membrane-spanning segment. Residues 197–215 (KGLGIAIKELFAGKPVLRH) are Extracellular-facing. A helical membrane pass occupies residues 216–236 (PLAWILLLSLIVCVSTQINYL). Residues 237–246 (NRALDIFNTS) are Cytoplasmic-facing. A helical membrane pass occupies residues 247-267 (IVTPIYYVFFTTSVLTCSAIL). Topologically, residues 268 to 278 (FKEWQDMPVDD) are extracellular. The chain crosses the membrane as a helical span at residues 279–299 (VIGTLSGFFTIIVGIFLLHAF). At 300–360 (KDVSFSLASL…SRRNGNLTAF (61 aa)) the chain is on the cytoplasmic side.

It belongs to the NIPA family. As to expression, widely expressed.

The protein localises to the cell membrane. It localises to the early endosome. The enzyme catalyses Mg(2+)(in) = Mg(2+)(out). In terms of biological role, acts as a selective Mg(2+) transporter. This chain is Magnesium transporter NIPA2 (NIPA2), found in Homo sapiens (Human).